The sequence spans 185 residues: Ribosome-recycling factor (185 aa).

Belongs to the RRF family.

The protein localises to the cytoplasm. In terms of biological role, responsible for the release of ribosomes from messenger RNA at the termination of protein biosynthesis. May increase the efficiency of translation by recycling ribosomes from one round of translation to another. Plays a role in sporulation. This Bacillus subtilis (strain 168) protein is Ribosome-recycling factor.